We begin with the raw amino-acid sequence, 354 residues long: Chorismate synthase (354 aa).

Residues R48 and R54 each coordinate NADP(+). FMN is bound by residues 125 to 127, 238 to 239, G278, 293 to 297, and R319; these read RSS, NA, and KPTSS.

The protein belongs to the chorismate synthase family. As to quaternary structure, homotetramer. FMNH2 serves as cofactor.

The enzyme catalyses 5-O-(1-carboxyvinyl)-3-phosphoshikimate = chorismate + phosphate. The protein operates within metabolic intermediate biosynthesis; chorismate biosynthesis; chorismate from D-erythrose 4-phosphate and phosphoenolpyruvate: step 7/7. Functionally, catalyzes the anti-1,4-elimination of the C-3 phosphate and the C-6 proR hydrogen from 5-enolpyruvylshikimate-3-phosphate (EPSP) to yield chorismate, which is the branch point compound that serves as the starting substrate for the three terminal pathways of aromatic amino acid biosynthesis. This reaction introduces a second double bond into the aromatic ring system. This Blochmanniella pennsylvanica (strain BPEN) protein is Chorismate synthase.